Reading from the N-terminus, the 207-residue chain is Protein GrpE (207 aa).

Composition is skewed to basic and acidic residues over residues 1–11 (MEENRDVKNEE) and 57–66 (DLVKNQEEEN). Residues 1-66 (MEENRDVKNE…DLVKNQEEEN (66 aa)) are disordered.

Belongs to the GrpE family. Homodimer.

The protein resides in the cytoplasm. In terms of biological role, participates actively in the response to hyperosmotic and heat shock by preventing the aggregation of stress-denatured proteins, in association with DnaK and GrpE. It is the nucleotide exchange factor for DnaK and may function as a thermosensor. Unfolded proteins bind initially to DnaJ; upon interaction with the DnaJ-bound protein, DnaK hydrolyzes its bound ATP, resulting in the formation of a stable complex. GrpE releases ADP from DnaK; ATP binding to DnaK triggers the release of the substrate protein, thus completing the reaction cycle. Several rounds of ATP-dependent interactions between DnaJ, DnaK and GrpE are required for fully efficient folding. This Clostridium beijerinckii (strain ATCC 51743 / NCIMB 8052) (Clostridium acetobutylicum) protein is Protein GrpE.